Reading from the N-terminus, the 390-residue chain is Heat stress transcription factor B-2b (390 aa).

The segment at 165-212 is disordered; that stretch reads TRDGSPVLSGEEQVISSSSSPEPPLVLPQAPSGSGSGGVASGDVGDEN. A coiled-coil region spans residues 206 to 237; it reads GDVGDENERLRRENAQLARELSQMRKLCNNIL. Residues 215–244 are hydrophobic repeat HR-A/B; sequence LRRENAQLARELSQMRKLCNNILLLMSKYA. The Nuclear localization signal signature appears at 318–322; it reads RKRMR. The tract at residues 322-363 is disordered; it reads RHDGGGDDDHAATVKAEPMDGRPHGKDEQSAETQAWPIYRPR. Positions 323-350 are enriched in basic and acidic residues; the sequence is HDGGGDDDHAATVKAEPMDGRPHGKDEQ.

Belongs to the HSF family. Class B subfamily. Homotrimer. Post-translationally, exhibits temperature-dependent phosphorylation.

Its subcellular location is the nucleus. Functionally, transcriptional regulator that specifically binds DNA of heat shock promoter elements (HSE). The chain is Heat stress transcription factor B-2b (HSFB2B) from Oryza sativa subsp. japonica (Rice).